An 83-amino-acid polypeptide reads, in one-letter code: RNA-binding protein Hfq (83 aa).

In terms of domain architecture, Sm spans 9 to 69 (DYFLNQLRKD…ISTFAPARNV (61 aa)).

It belongs to the Hfq family. In terms of assembly, homohexamer.

In terms of biological role, RNA chaperone that binds small regulatory RNA (sRNAs) and mRNAs to facilitate mRNA translational regulation in response to envelope stress, environmental stress and changes in metabolite concentrations. Also binds with high specificity to tRNAs. The sequence is that of RNA-binding protein Hfq from Exiguobacterium sibiricum (strain DSM 17290 / CCUG 55495 / CIP 109462 / JCM 13490 / 255-15).